We begin with the raw amino-acid sequence, 168 residues long: Vasopressin-neurophysin 2-copeptin (168 aa).

Positions 1–23 (MLAMMLNTTLSACFLSLLALTSA) are cleaved as a signal peptide. Cys-24 and Cys-29 are disulfide-bonded. Gly-32 is modified (glycine amide). 7 disulfides stabilise this stretch: Cys-45/Cys-89, Cys-48/Cys-62, Cys-56/Cys-79, Cys-63/Cys-69, Cys-96/Cys-108, Cys-102/Cys-120, and Cys-109/Cys-114. Asn-135 carries N-linked (GlcNAc...) asparagine glycosylation.

This sequence belongs to the vasopressin/oxytocin family. As to quaternary structure, interacts with vasopressin receptors V1bR/AVPR1B (Ki=85 pM), V1aR/AVPR1A (Ki=0.6 nM) and V2R/AVPR2 (Ki=4.9 nM). Interacts with oxytocin receptor (OXTR) (Ki=110 nM).

The protein resides in the secreted. Functionally, neurophysin 2 specifically binds vasopressin. Vasopressin has a direct antidiuretic action on the kidney, it also causes vasoconstriction of the peripheral vessels. Acts by binding to vasopressin receptors (V1bR/AVPR1B, V1aR/AVPR1A, and V2R/AVPR2). This chain is Vasopressin-neurophysin 2-copeptin (Avp), found in Rattus norvegicus (Rat).